The following is a 153-amino-acid chain: uncharacterized protein (153 aa).

The next 2 membrane-spanning stretches (helical) occupy residues 16 to 36 and 97 to 117; these read ILAC…ILEI and ALTT…CIIC.

It is found in the membrane. This is an uncharacterized protein from Human herpesvirus 6A (strain Uganda-1102) (HHV-6 variant A).